The primary structure comprises 372 residues: N-methyl-L-tryptophan oxidase (372 aa).

4 to 34 (DLIIIGSGSVGAAAGYYATRAGLKVLMTDAH) contacts FAD. Cys307 carries the post-translational modification S-8alpha-FAD cysteine.

It belongs to the MSOX/MTOX family. MTOX subfamily. In terms of assembly, monomer. FAD is required as a cofactor.

It carries out the reaction N(alpha)-methyl-L-tryptophan + O2 + H2O = L-tryptophan + formaldehyde + H2O2. In terms of biological role, catalyzes the oxidative demethylation of N-methyl-L-tryptophan. The sequence is that of N-methyl-L-tryptophan oxidase from Salmonella newport (strain SL254).